The chain runs to 232 residues: Probable GTP-binding protein EngB (232 aa).

The EngB-type G domain occupies 13–188; the sequence is IGLEVAFAGR…AGVMGNWYEY (176 aa). GTP-binding positions include 21–28, 48–52, 67–70, 134–137, and 167–169; these read GRSNAGKS, GRTQM, DLPG, TKAD, and FSA. 2 residues coordinate Mg(2+): Ser28 and Thr50.

It belongs to the TRAFAC class TrmE-Era-EngA-EngB-Septin-like GTPase superfamily. EngB GTPase family. Requires Mg(2+) as cofactor.

Its function is as follows. Necessary for normal cell division and for the maintenance of normal septation. This Psychrobacter arcticus (strain DSM 17307 / VKM B-2377 / 273-4) protein is Probable GTP-binding protein EngB.